The sequence spans 304 residues: MSQLLTMSELSKEEISEILKDAEDFANGKERKATEQTFVANLFFENSTRTRFSFEVAEKRLGLEVLNFSADSSSVQKGETLYDTIRTLESIGAKAVVIRHQQDRYFDELKDKVNIPILNAGDGCGNHPTQCLLDLLTIKQEFGRFEGLKIAIVGDIRHSRVARSNAEALTKLGATIYFASPEEWKDETNTFGTYRSLDELIPEVDVMMLLRVQHERHDHYETDIMKEYHENHGLTMEREERMKEGSIIMHPAPVNRDVEIASELVECKRSRIFKQMENGVYVRMAVLKRALPNVLGGMKHELFV.

Residues R49 and T50 each coordinate carbamoyl phosphate. An L-aspartate-binding site is contributed by K77. The carbamoyl phosphate site is built by R99, H127, and Q130. Residues R160 and R211 each contribute to the L-aspartate site. 2 residues coordinate carbamoyl phosphate: A252 and P253.

The protein belongs to the aspartate/ornithine carbamoyltransferase superfamily. ATCase family. Heterododecamer (2C3:3R2) of six catalytic PyrB chains organized as two trimers (C3), and six regulatory PyrI chains organized as three dimers (R2).

The enzyme catalyses carbamoyl phosphate + L-aspartate = N-carbamoyl-L-aspartate + phosphate + H(+). It participates in pyrimidine metabolism; UMP biosynthesis via de novo pathway; (S)-dihydroorotate from bicarbonate: step 2/3. Functionally, catalyzes the condensation of carbamoyl phosphate and aspartate to form carbamoyl aspartate and inorganic phosphate, the committed step in the de novo pyrimidine nucleotide biosynthesis pathway. This Bacillus cytotoxicus (strain DSM 22905 / CIP 110041 / 391-98 / NVH 391-98) protein is Aspartate carbamoyltransferase catalytic subunit.